A 122-amino-acid chain; its full sequence is Large ribosomal subunit protein bL12 (122 aa).

Belongs to the bacterial ribosomal protein bL12 family. In terms of assembly, homodimer. Part of the ribosomal stalk of the 50S ribosomal subunit. Forms a multimeric L10(L12)X complex, where L10 forms an elongated spine to which 2 to 4 L12 dimers bind in a sequential fashion. Binds GTP-bound translation factors.

Its function is as follows. Forms part of the ribosomal stalk which helps the ribosome interact with GTP-bound translation factors. Is thus essential for accurate translation. The chain is Large ribosomal subunit protein bL12 from Xanthomonas oryzae pv. oryzae (strain MAFF 311018).